The primary structure comprises 837 residues: V-type proton ATPase 116 kDa subunit a 1 (837 aa).

The Cytoplasmic portion of the chain corresponds to 1 to 388 (MGELFRSEEM…DAYGIGTYRE (388 aa)). Residues Thr250 and Thr360 each carry the phosphothreonine modification. Residue Tyr364 is modified to Phosphotyrosine. Residues 389 to 407 (INPAPYTIITFPFLFAVMF) traverse the membrane as a helical segment. Topologically, residues 408–409 (GD) are vacuolar. Residues 410–426 (FGHGILMTLFAVWMVLR) form a helical membrane-spanning segment. Over 427–441 (ESRILSQKNENEMFS) the chain is Cytoplasmic. Residues 442-471 (TVFSGRYIILLMGVFSMYTGLIYNDCFSKS) form a helical membrane-spanning segment. The Vacuolar segment spans residues 472-534 (LNIFGSSWSV…ATNKLTFLNS (63 aa)). Residues 535–554 (FKMKMSVILGIIHMLFGVSL) form a helical membrane-spanning segment. The Cytoplasmic segment spans residues 555–572 (SLFNHIYFKKPLNIYFGF). The chain crosses the membrane as a helical span at residues 573 to 593 (IPEIIFMTSLFGYLVILIFYK). At 594-638 (WTAYDAHTSENAPSLLIHFINMFLFSYPESGYSMLYSGQKGIQCF) the chain is on the vacuolar side. The helical transmembrane segment at 639–658 (LVVVALLCVPWMLLFKPLVL) threads the bilayer. Residues 659-724 (RRQYLRRKHL…ATMVHQAIHT (66 aa)) are Cytoplasmic-facing. The chain crosses the membrane as a helical span at residues 725–749 (IEYCLGCISNTASYLRLWALSLAHA). Over 750 to 770 (QLSEVLWTMVIHIGLSVKSLA) the chain is Vacuolar. The helical transmembrane segment at 771–809 (GGLVLFFFFTAFATLTVAILLIMEGLSAFLHALRLHWVE) threads the bilayer. The Cytoplasmic segment spans residues 810-837 (FQNKFYSGTGFKFLPFSFEHIREGKFGE).

This sequence belongs to the V-ATPase 116 kDa subunit family. As to quaternary structure, V-ATPase is a heteromultimeric enzyme made up of two complexes: the ATP-hydrolytic V1 complex and the proton translocation V0 complex. The V1 complex consists of three catalytic AB heterodimers that form a heterohexamer, three peripheral stalks each consisting of EG heterodimers, one central rotor including subunits D and F, and the regulatory subunits C and H. The proton translocation complex V0 consists of the proton transport subunit a, a ring of proteolipid subunits c9c'', rotary subunit d, subunits e and f, and the accessory subunits ATP6AP1/Ac45 and ATP6AP2/PRR. Interacts with SPAAR.

Its subcellular location is the cytoplasmic vesicle. The protein localises to the clathrin-coated vesicle membrane. It is found in the secretory vesicle. It localises to the synaptic vesicle membrane. The protein resides in the melanosome. Its function is as follows. Subunit of the V0 complex of vacuolar(H+)-ATPase (V-ATPase), a multisubunit enzyme composed of a peripheral complex (V1) that hydrolyzes ATP and a membrane integral complex (V0) that translocates protons. V-ATPase is responsible for the acidification of various organelles, such as lysosomes, endosomes, the trans-Golgi network, and secretory granules, including synaptic vesicles. In certain cell types, can be exported to the plasma membrane, where it is involved in the acidification of the extracellular environment. Required for assembly and activity of the vacuolar ATPase. Through its action on compartment acidification, plays an essential role in neuronal development in terms of integrity and connectivity of neurons. In Pongo abelii (Sumatran orangutan), this protein is V-type proton ATPase 116 kDa subunit a 1 (ATP6V0A1).